An 82-amino-acid polypeptide reads, in one-letter code: Small ribosomal subunit protein bS18 (82 aa).

Positions 1–20 (MAEVSSSTVRRPFHRRRKTC) are disordered.

This sequence belongs to the bacterial ribosomal protein bS18 family. As to quaternary structure, part of the 30S ribosomal subunit. Forms a tight heterodimer with protein bS6.

Functionally, binds as a heterodimer with protein bS6 to the central domain of the 16S rRNA, where it helps stabilize the platform of the 30S subunit. In Allorhizobium ampelinum (strain ATCC BAA-846 / DSM 112012 / S4) (Agrobacterium vitis (strain S4)), this protein is Small ribosomal subunit protein bS18.